A 297-amino-acid chain; its full sequence is tRNA-cytidine(32) 2-sulfurtransferase (297 aa).

The PP-loop motif motif lies at 61-66 (SGGKDS). [4Fe-4S] cluster is bound by residues Cys136, Cys139, and Cys227.

It belongs to the TtcA family. In terms of assembly, homodimer. The cofactor is Mg(2+). [4Fe-4S] cluster serves as cofactor.

The protein resides in the cytoplasm. It catalyses the reaction cytidine(32) in tRNA + S-sulfanyl-L-cysteinyl-[cysteine desulfurase] + AH2 + ATP = 2-thiocytidine(32) in tRNA + L-cysteinyl-[cysteine desulfurase] + A + AMP + diphosphate + H(+). It functions in the pathway tRNA modification. Catalyzes the ATP-dependent 2-thiolation of cytidine in position 32 of tRNA, to form 2-thiocytidine (s(2)C32). The sulfur atoms are provided by the cysteine/cysteine desulfurase (IscS) system. This is tRNA-cytidine(32) 2-sulfurtransferase from Paracoccus denitrificans (strain Pd 1222).